We begin with the raw amino-acid sequence, 56 residues long: uncharacterized protein (56 aa).

Residues 6–26 traverse the membrane as a helical segment; the sequence is MLLIMLYMVLVVNDLILYNIL.

It is found in the membrane. This is an uncharacterized protein from Dictyostelium discoideum (Social amoeba).